Consider the following 101-residue polypeptide: Protein Tat (101 aa).

The tract at residues 1 to 24 (MEPIDPNLEPWNHPGSQPKTACNN) is interaction with human CREBBP. Residues 1 to 48 (MEPIDPNLEPWNHPGSQPKTACNNCYCKQCCYHCQLCFTKKGLGISYG) form a transactivation region. Zn(2+) is bound by residues Cys22, Cys25, and Cys27. Residues 22–37 (CNNCYCKQCCYHCQLC) are cysteine-rich. Lys28 carries the post-translational modification N6-acetyllysine; by host PCAF. Residues Cys30, His33, Cys34, and Cys37 each coordinate Zn(2+). A core region spans residues 38–48 (FTKKGLGISYG). Residues 48–101 (GRRKRKQRRRTSESSQNHQDPVPKQPLSQPGGIETGQKKSKKEVESQTTSDQFA) form a disordered region. Residues 49–57 (RRKRKQRRR) carry the Nuclear localization signal, RNA-binding (TAR), and protein transduction motif. The tract at residues 49–86 (RRKRKQRRRTSESSQNHQDPVPKQPLSQPGGIETGQKK) is interaction with the host capping enzyme RNGTT. Lys51 is subject to N6-acetyllysine; by host EP300 and GCN5L2. The residue at position 52 (Arg52) is an Asymmetric dimethylarginine; by host PRMT6. A Glycyl lysine isopeptide (Lys-Gly) (interchain with G-Cter in ubiquitin) cross-link involves residue Lys71.

The protein belongs to the lentiviruses Tat family. As to quaternary structure, interacts with host CCNT1. Associates with the P-TEFb complex composed at least of Tat, P-TEFb (CDK9 and CCNT1), TAR RNA, RNA Pol II. Recruits the HATs CREBBP, TAF1/TFIID, EP300, PCAF and GCN5L2. Interacts with host KAT5/Tip60; this interaction targets the latter to degradation. Interacts with the host deacetylase SIRT1. Interacts with host capping enzyme RNGTT; this interaction stimulates RNGTT. Binds to host KDR, and to the host integrins ITGAV/ITGB3 and ITGA5/ITGB1. Interacts with host KPNB1/importin beta-1 without previous binding to KPNA1/importin alpha-1. Interacts with EIF2AK2. Interacts with host nucleosome assembly protein NAP1L1; this interaction may be required for the transport of Tat within the nucleus, since the two proteins interact at the nuclear rim. Interacts with host C1QBP/SF2P32; this interaction involves lysine-acetylated Tat. Interacts with the host chemokine receptors CCR2, CCR3 and CXCR4. Interacts with host DPP4/CD26; this interaction may trigger an anti-proliferative effect. Interacts with host LDLR. Interacts with the host extracellular matrix metalloproteinase MMP1. Interacts with host PRMT6; this interaction mediates Tat's methylation. Interacts with, and is ubiquitinated by MDM2/Hdm2. Interacts with host PSMC3 and HTATIP2. Interacts with STAB1; this interaction may overcome SATB1-mediated repression of IL2 and IL2RA (interleukin) in T cells by binding to the same domain than HDAC1. Interacts (when acetylated) with human CDK13, thereby increasing HIV-1 mRNA splicing and promoting the production of the doubly spliced HIV-1 protein Nef. Interacts with host TBP; this interaction modulates the activity of transcriptional pre-initiation complex. Interacts with host RELA. Post-translationally, asymmetrical arginine methylation by host PRMT6 seems to diminish the transactivation capacity of Tat and affects the interaction with host CCNT1. In terms of processing, polyubiquitination by host MDM2 does not target Tat to degradation, but activates its transactivation function and fosters interaction with CCNT1 and TAR RNA. Phosphorylated by EIF2AK2 on serine and threonine residues adjacent to the basic region important for TAR RNA binding and function. Phosphorylation of Tat by EIF2AK2 is dependent on the prior activation of EIF2AK2 by dsRNA.

The protein resides in the host nucleus. It localises to the host nucleolus. Its subcellular location is the host cytoplasm. It is found in the secreted. Functionally, transcriptional activator that increases RNA Pol II processivity, thereby increasing the level of full-length viral transcripts. Recognizes a hairpin structure at the 5'-LTR of the nascent viral mRNAs referred to as the transactivation responsive RNA element (TAR) and recruits the cyclin T1-CDK9 complex (P-TEFb complex) that will in turn hyperphosphorylate the RNA polymerase II to allow efficient elongation. The CDK9 component of P-TEFb and other Tat-activated kinases hyperphosphorylate the C-terminus of RNA Pol II that becomes stabilized and much more processive. Other factors such as HTATSF1/Tat-SF1, SUPT5H/SPT5, and HTATIP2 are also important for Tat's function. Besides its effect on RNA Pol II processivity, Tat induces chromatin remodeling of proviral genes by recruiting the histone acetyltransferases (HATs) CREBBP, EP300 and PCAF to the chromatin. This also contributes to the increase in proviral transcription rate, especially when the provirus integrates in transcriptionally silent region of the host genome. To ensure maximal activation of the LTR, Tat mediates nuclear translocation of NF-kappa-B by interacting with host RELA. Through its interaction with host TBP, Tat may also modulate transcription initiation. Tat can reactivate a latently infected cell by penetrating in it and transactivating its LTR promoter. In the cytoplasm, Tat is thought to act as a translational activator of HIV-1 mRNAs. Its function is as follows. Extracellular circulating Tat can be endocytosed by surrounding uninfected cells via the binding to several surface receptors such as CD26, CXCR4, heparan sulfate proteoglycans (HSPG) or LDLR. Neurons are rarely infected, but they internalize Tat via their LDLR. Through its interaction with nuclear HATs, Tat is potentially able to control the acetylation-dependent cellular gene expression. Modulates the expression of many cellular genes involved in cell survival, proliferation or in coding for cytokines or cytokine receptors. Tat plays a role in T-cell and neurons apoptosis. Tat induced neurotoxicity and apoptosis probably contribute to neuroAIDS. Circulating Tat also acts as a chemokine-like and/or growth factor-like molecule that binds to specific receptors on the surface of the cells, affecting many cellular pathways. In the vascular system, Tat binds to ITGAV/ITGB3 and ITGA5/ITGB1 integrins dimers at the surface of endothelial cells and competes with bFGF for heparin-binding sites, leading to an excess of soluble bFGF. The polypeptide is Protein Tat (Pan troglodytes (Chimpanzee)).